The chain runs to 266 residues: MNKPIGVIDSGVGGLTVAKEIMRQLPNETIYYLGDIARCPYGPRPGDEVKQFTTQLANKLMQFDIKMLVIACNTATAVALEHLQQMLPIPVIGVIEPGSRTAIMTTKNQNVLILGTEGTIKSEAYRHHIKHINPNVHVLWCGLPGFVPLVEQMRYDDPTITSIVIHQTLKQWRNTDADTIILGCTHYPLLYKPINDYFGGEKKVISSGLETAREVSALLTFSNEHASYTQHPEHRFFATGDTVHIKNIILQWLKLDVEVERISVDE.

Residues 9–10 (DS) and 41–42 (YG) each bind substrate. The active-site Proton donor/acceptor is the Cys-72. 73–74 (NT) contributes to the substrate binding site. Catalysis depends on Cys-184, which acts as the Proton donor/acceptor. 185-186 (TH) is a substrate binding site.

It belongs to the aspartate/glutamate racemases family.

It carries out the reaction L-glutamate = D-glutamate. The protein operates within cell wall biogenesis; peptidoglycan biosynthesis. Its function is as follows. Provides the (R)-glutamate required for cell wall biosynthesis. In Staphylococcus haemolyticus, this protein is Glutamate racemase.